A 200-amino-acid chain; its full sequence is Small ribosomal subunit protein mS26 (200 aa).

Residues Met-1–Arg-27 constitute a mitochondrion transit peptide. Residues Met-1 to Thr-44 are disordered. Residue Lys-159 is modified to N6-acetyllysine.

The protein belongs to the mitochondrion-specific ribosomal protein mS26 family. As to quaternary structure, component of the mitochondrial ribosome small subunit (28S) which comprises a 12S rRNA and about 30 distinct proteins.

The protein localises to the mitochondrion. The chain is Small ribosomal subunit protein mS26 (Mrps26) from Mus musculus (Mouse).